A 472-amino-acid polypeptide reads, in one-letter code: MTTHLVWFRQDLRLHDNLALAAACRNSSARVLALYIATPRQWATHNMSPRQAELINAQLNGLQIALAEKGIPLLFREVDDFVASVEIVKQVCAENSVTHLFYNYQYEVNERARDVEVERALRNVVCEGFDDSVILPPGAVMTGNHEMYKVFTPFKNAWLKRLREGMPECVAAPKVRSSGSIEPSPSITLNYPRQSFDTAHFPVEEKAAIAQLRQFCQNGAGEYEQQRDFPAVEGTSRLSASLATGGLSPRQCLHRLLAEQPQALDGGAGSVWLNELIWREFYRHLITYHPSLCKHRPFIAWTDRVQWQSNPAHLQAWQEGKTGYPIVDAAMRQLNSTGWMHNRLRMITASFLVKDLLIDWREGERYFMSQLIDGDLAANNGGWQWAASTGTDAAPYFRIFNPTTQGEKFDHEGEFIRQWLPELRDVPGKVVHEPWKWAQKAGVTLDYPQPIVEHKEARVQTLAAYEAARKGK.

Residues Thr-2–Ile-134 enclose the Photolyase/cryptochrome alpha/beta domain. The (6R)-5,10-methylene-5,6,7,8-tetrahydrofolate site is built by Asn-109 and Glu-110. FAD is bound at residue Tyr-223. Arg-227 serves as a coordination point for DNA. FAD is bound by residues Thr-235–Ser-239, Trp-272, and Glu-275–Tyr-282. Interaction with DNA stretches follow at residues Glu-275–Tyr-282 and Asn-342–Arg-343. Asp-373–Asp-375 is a binding site for FAD. Gln-405 serves as a coordination point for DNA.

Belongs to the DNA photolyase class-1 family. Monomer. The cofactor is FAD. (6R)-5,10-methylene-5,6,7,8-tetrahydrofolate is required as a cofactor.

It catalyses the reaction cyclobutadipyrimidine (in DNA) = 2 pyrimidine residues (in DNA).. In terms of biological role, involved in repair of UV radiation-induced DNA damage. Catalyzes the light-dependent monomerization (300-600 nm) of cyclobutyl pyrimidine dimers (in cis-syn configuration), which are formed between adjacent bases on the same DNA strand upon exposure to ultraviolet radiation. In Escherichia coli (strain K12), this protein is Deoxyribodipyrimidine photo-lyase (phrB).